Reading from the N-terminus, the 188-residue chain is Josephin-2 (188 aa).

The 178-residue stretch at 11–188 (PPTVYHERQR…EEKGSWLRTD (178 aa)) folds into the Josephin domain. The Nucleophile role is filled by C24. The active-site Proton acceptor is the H125.

The protein resides in the cytoplasm. It localises to the cytosol. The catalysed reaction is Thiol-dependent hydrolysis of ester, thioester, amide, peptide and isopeptide bonds formed by the C-terminal Gly of ubiquitin (a 76-residue protein attached to proteins as an intracellular targeting signal).. In terms of biological role, cleaves 'Lys-63'-linked poly-ubiquitin chains, and with lesser efficiency 'Lys-48'-linked poly-ubiquitin chains (in vitro). May act as a deubiquitinating enzyme. The protein is Josephin-2 (JOSD2) of Homo sapiens (Human).